The following is a 241-amino-acid chain: Ribonuclease PH (241 aa).

Residues arginine 89 and 127–129 (GTR) contribute to the phosphate site.

The protein belongs to the RNase PH family. Homohexameric ring arranged as a trimer of dimers.

The catalysed reaction is tRNA(n+1) + phosphate = tRNA(n) + a ribonucleoside 5'-diphosphate. In terms of biological role, phosphorolytic 3'-5' exoribonuclease that plays an important role in tRNA 3'-end maturation. Removes nucleotide residues following the 3'-CCA terminus of tRNAs; can also add nucleotides to the ends of RNA molecules by using nucleoside diphosphates as substrates, but this may not be physiologically important. Probably plays a role in initiation of 16S rRNA degradation (leading to ribosome degradation) during starvation. The sequence is that of Ribonuclease PH from Xanthomonas euvesicatoria pv. vesicatoria (strain 85-10) (Xanthomonas campestris pv. vesicatoria).